The sequence spans 388 residues: GDP-4-keto-6-deoxy-D-mannose 3-dehydratase (388 aa).

26–29 provides a ligand contact to GDP-4-dehydro-alpha-D-rhamnose; it reads KMFT. The chain crosses the membrane as a helical span at residues 49-69; the sequence is YAVMVSSGSTANLLMIAALFF. Residues 56-57, Trp88, Glu162, and Ser183 each bind pyridoxal 5'-phosphate; that span reads GS. The Proton donor/acceptor role is filled by His188. Position 215 (His215) interacts with L-glutamate. Arg219 lines the GDP-4-dehydro-alpha-D-rhamnose pocket. Asn248 provides a ligand contact to pyridoxal 5'-phosphate. Arg250 contacts L-glutamate. Glu329 contributes to the GDP-4-dehydro-alpha-D-rhamnose binding site.

This sequence belongs to the DegT/DnrJ/EryC1 family. Homodimer. It depends on pyridoxal 5'-phosphate as a cofactor.

The protein localises to the cell membrane. It carries out the reaction GDP-4-dehydro-alpha-D-rhamnose + L-glutamate = GDP-4-dehydro-3,6-dideoxy-alpha-D-mannose + 2-oxoglutarate + NH4(+). It participates in nucleotide-sugar metabolism; GDP-L-colitose biosynthesis. Its function is as follows. Involved in the biosynthesis of L-colitose, a 3,6-dideoxyhexose present in the O-antigen region of lipopolysaccharides (LPS), where it serves as an antigenic determinant and is vital for bacterial defense and survival. Catalyzes the removal of the C3'-hydroxyl group from GDP-4-keto-6-deoxy-D-mannose via a combined transamination-deoxygenation reaction. The catalysis is initiated by a transamination step in which pyridoxal 5'-phosphate (PLP) is converted to pyridoxamine 5'-phosphate (PMP) in the presence of L-glutamate. This coenzyme then forms a Schiff base with GDP-4-keto-6-deoxy-D-mannose and the resulting adduct undergoes a PMP-mediated beta-dehydration reaction to give a sugar enamine intermediate, which after tautomerization and hydrolysis to release ammonia yields GDP-4-keto-3,6-dideoxy-D-mannose as a product. In vitro, is able to catalyze the formation of GDP-4-keto-3,6-dideoxymannose using GDP-perosamine rather than GDP-4-keto-6-deoxymannose as a substrate, with no need of glutamate. In Escherichia coli O55:H7 (strain CB9615 / EPEC), this protein is GDP-4-keto-6-deoxy-D-mannose 3-dehydratase.